The sequence spans 377 residues: 2-aminoethylphosphonate--pyruvate transaminase (377 aa).

Position 194 is an N6-(pyridoxal phosphate)lysine (Lys194).

It belongs to the class-V pyridoxal-phosphate-dependent aminotransferase family. PhnW subfamily. Homodimer. Pyridoxal 5'-phosphate is required as a cofactor.

The catalysed reaction is (2-aminoethyl)phosphonate + pyruvate = phosphonoacetaldehyde + L-alanine. Functionally, involved in phosphonate degradation. This chain is 2-aminoethylphosphonate--pyruvate transaminase, found in Cupriavidus necator (strain ATCC 17699 / DSM 428 / KCTC 22496 / NCIMB 10442 / H16 / Stanier 337) (Ralstonia eutropha).